A 218-amino-acid polypeptide reads, in one-letter code: N-(5'-phosphoribosyl)anthranilate isomerase (218 aa).

This sequence belongs to the TrpF family.

The catalysed reaction is N-(5-phospho-beta-D-ribosyl)anthranilate = 1-(2-carboxyphenylamino)-1-deoxy-D-ribulose 5-phosphate. It functions in the pathway amino-acid biosynthesis; L-tryptophan biosynthesis; L-tryptophan from chorismate: step 3/5. In Stenotrophomonas maltophilia (strain R551-3), this protein is N-(5'-phosphoribosyl)anthranilate isomerase.